The primary structure comprises 266 residues: MTEVLTEPRSIRIKGRSFLAVVLSPDLPVDNWLERLDDLASRSAGFFLGRPVVLDVAELAISRDELKALIAELSSRNVSIMGLEGARPSMVERGMPPILKGGRPVSDVDVPKVEPESPPAEEKKKTGKATKASGKSDEIGETDSPQAMITAPQARSVVQSLLLREPVRSGQSVIFTEGDVTVIGSVASGAEIIAGGSIHIYGALRGRAMAGSVGNASARIFCRKMEAELLAIDGIYKMAEDMPPELLGKPVQLWLEDDVIKAEKMA.

The segment at 98-146 is disordered; it reads ILKGGRPVSDVDVPKVEPESPPAEEKKKTGKATKASGKSDEIGETDSPQ. Basic and acidic residues predominate over residues 109 to 124; that stretch reads DVPKVEPESPPAEEKK.

It belongs to the MinC family. In terms of assembly, interacts with MinD and FtsZ.

Its function is as follows. Cell division inhibitor that blocks the formation of polar Z ring septums. Rapidly oscillates between the poles of the cell to destabilize FtsZ filaments that have formed before they mature into polar Z rings. Prevents FtsZ polymerization. In Allorhizobium ampelinum (strain ATCC BAA-846 / DSM 112012 / S4) (Agrobacterium vitis (strain S4)), this protein is Probable septum site-determining protein MinC.